The sequence spans 201 residues: dITP/XTP pyrophosphatase (201 aa).

8–13 (TTNENK) serves as a coordination point for substrate. The Proton acceptor role is filled by Asp68. Asp68 contacts Mg(2+). Substrate contacts are provided by residues Ser69, 155–158 (FGYD), Lys177, and 182–183 (HR).

This sequence belongs to the HAM1 NTPase family. Homodimer. Mg(2+) serves as cofactor.

It catalyses the reaction XTP + H2O = XMP + diphosphate + H(+). The enzyme catalyses dITP + H2O = dIMP + diphosphate + H(+). It carries out the reaction ITP + H2O = IMP + diphosphate + H(+). Pyrophosphatase that catalyzes the hydrolysis of nucleoside triphosphates to their monophosphate derivatives, with a high preference for the non-canonical purine nucleotides XTP (xanthosine triphosphate), dITP (deoxyinosine triphosphate) and ITP. Seems to function as a house-cleaning enzyme that removes non-canonical purine nucleotides from the nucleotide pool, thus preventing their incorporation into DNA/RNA and avoiding chromosomal lesions. The protein is dITP/XTP pyrophosphatase of Borrelia garinii subsp. bavariensis (strain ATCC BAA-2496 / DSM 23469 / PBi) (Borreliella bavariensis).